A 138-amino-acid chain; its full sequence is Acidic phospholipase A2 Tpu-E6a (138 aa).

A signal peptide spans 1-16; it reads MRTLWIMAVLLLGVKG. Cystine bridges form between Cys42-Cys131, Cys44-Cys60, Cys59-Cys111, Cys65-Cys138, Cys66-Cys104, Cys73-Cys97, and Cys91-Cys102. The Ca(2+) site is built by Tyr43, Gly45, and Gly47. His63 is a catalytic residue. Asp64 is a binding site for Ca(2+). Asp105 is a catalytic residue.

Monomer. Ca(2+) serves as cofactor. In terms of tissue distribution, expressed by the venom gland.

The protein resides in the secreted. The enzyme catalyses a 1,2-diacyl-sn-glycero-3-phosphocholine + H2O = a 1-acyl-sn-glycero-3-phosphocholine + a fatty acid + H(+). Functionally, snake venom phospholipase A2 (PLA2) that impairs hemostasis. It weakly inhibits ADP-induced platelet aggregation when tested on platelet rich plasma from human and rabbit blood (15-25% of inhibition at 5-10 ug of enzyme), and dose-dependently inhibits blood coagulation, possibly by inhibiting thrombin activation. Exhibits high hydrolytic activities toward L-dipalmitoyl phosphatidylcholine. PLA2 catalyzes the calcium-dependent hydrolysis of the 2-acyl groups in 3-sn-phosphoglycerides. This Craspedocephalus puniceus (Flat-nosed pitviper) protein is Acidic phospholipase A2 Tpu-E6a.